A 125-amino-acid polypeptide reads, in one-letter code: Small ribosomal subunit protein uS12 (125 aa).

Residues 1 to 27 (MPTINQLVRKGREKGEQKSTAPALKSC) are disordered. Aspartate 89 is subject to 3-methylthioaspartic acid. The segment at 103–125 (DASGVQKRNQGRSKYGTKRPKKK) is disordered. A compositionally biased stretch (basic residues) spans 111-125 (NQGRSKYGTKRPKKK).

It belongs to the universal ribosomal protein uS12 family. As to quaternary structure, part of the 30S ribosomal subunit. Contacts proteins S8 and S17. May interact with IF1 in the 30S initiation complex.

Functionally, with S4 and S5 plays an important role in translational accuracy. Interacts with and stabilizes bases of the 16S rRNA that are involved in tRNA selection in the A site and with the mRNA backbone. Located at the interface of the 30S and 50S subunits, it traverses the body of the 30S subunit contacting proteins on the other side and probably holding the rRNA structure together. The combined cluster of proteins S8, S12 and S17 appears to hold together the shoulder and platform of the 30S subunit. The sequence is that of Small ribosomal subunit protein uS12 from Syntrophomonas wolfei subsp. wolfei (strain DSM 2245B / Goettingen).